The following is a 730-amino-acid chain: Hepatocyte growth factor (730 aa).

A signal peptide spans 1-31; the sequence is MWVTKLLPLLVLQQLLLHLLLLPVAVPRAEG. A Pyrrolidone carboxylic acid modification is found at glutamine 32. One can recognise a PAN domain in the interval 37–123; it reads NTLHEFKKSA…HEFDLYENKD (87 aa). 8 disulfides stabilise this stretch: cysteine 70-cysteine 96, cysteine 74-cysteine 84, cysteine 128-cysteine 206, cysteine 149-cysteine 189, cysteine 177-cysteine 201, cysteine 211-cysteine 288, cysteine 232-cysteine 271, and cysteine 260-cysteine 283. Kringle domains lie at 128 to 206 and 211 to 288; these read CIIG…IPQC and CMTC…IKMC. Asparagine 294 is a glycosylation site (N-linked (GlcNAc...) asparagine). 11 disulfides stabilise this stretch: cysteine 305/cysteine 383, cysteine 326/cysteine 365, cysteine 354/cysteine 377, cysteine 391/cysteine 469, cysteine 412/cysteine 452, cysteine 440/cysteine 464, cysteine 487/cysteine 606, cysteine 519/cysteine 535, cysteine 614/cysteine 681, cysteine 644/cysteine 660, and cysteine 671/cysteine 699. 2 consecutive Kringle domains span residues 305-383 and 391-469; these read CIQG…IPKC and CYRG…IFRC. N-linked (GlcNAc...) asparagine glycosylation occurs at asparagine 402. Residues 495–723 enclose the Peptidase S1 domain; that stretch reads VVNGIPTRTN…YAKWIHKIIL (229 aa). 2 N-linked (GlcNAc...) asparagine glycosylation sites follow: asparagine 568 and asparagine 655.

Belongs to the peptidase S1 family. Plasminogen subfamily. In terms of assembly, dimer of an alpha chain and a beta chain linked by a disulfide bond. Interacts with SRPX2; the interaction increases HGF mitogenic activity. Post-translationally, the single-chain precursor undergoes proteolytic processing by TMPRSS13 resulting in an active two-chain form. The single-chain precursor undergoes proteolytic processing by HGFAC resulting in an active two-chain form.

Potent mitogen for mature parenchymal hepatocyte cells, seems to be a hepatotrophic factor, and acts as a growth factor for a broad spectrum of tissues and cell types. Activating ligand for the receptor tyrosine kinase MET by binding to it and promoting its dimerization. Activates MAPK signaling following TMPRSS13 cleavage and activation. In Canis lupus familiaris (Dog), this protein is Hepatocyte growth factor (HGF).